The sequence spans 394 residues: G2/mitotic-specific cyclin-B2 (394 aa).

The protein belongs to the cyclin family. Cyclin AB subfamily. As to quaternary structure, interacts with the CDK1 protein kinase to form a serine/threonine kinase holoenzyme complex also known as maturation promoting factor (MPF). The cyclin subunit imparts substrate specificity to the complex.

Functionally, essential for the control of the cell cycle at the G2/M (mitosis) transition. In Anguilla japonica (Japanese eel), this protein is G2/mitotic-specific cyclin-B2 (ccnb2).